Reading from the N-terminus, the 95-residue chain is Large ribosomal subunit protein bL25 (95 aa).

The protein belongs to the bacterial ribosomal protein bL25 family. In terms of assembly, part of the 50S ribosomal subunit; part of the 5S rRNA/L5/L18/L25 subcomplex. Contacts the 5S rRNA. Binds to the 5S rRNA independently of L5 and L18.

Functionally, this is one of the proteins that binds to the 5S RNA in the ribosome where it forms part of the central protuberance. The protein is Large ribosomal subunit protein bL25 of Shewanella pealeana (strain ATCC 700345 / ANG-SQ1).